The following is a 283-amino-acid chain: MTKRITTIKEMQHLSRTRKAHNKQIGFVPTMGALHDGHLQMVKQSIADNDYTVVSVFVNPLQFGPNEDFDAYPRTIEEDEAQLDALGADYVFYPSVEEMYPKPLELSINVHRMAEVLEGAKRPGHFDGVVTVVNKLFNIIRPDIAYFGKKDAQQLAIIEKMVEEFNHPITIRGMDTIRELDGLAKSSRNIYLTDNERQEAVQLYQSLLKAKQLYDAGERSSDVIIDEIHTHLTTHTSGTIEEIAIYSYPELIEQTQITGRIFISLAVKFSQARLIDNIIVEKS.

31–38 (MGALHDGH) lines the ATP pocket. Residue His38 is the Proton donor of the active site. Gln62 lines the (R)-pantoate pocket. Gln62 is a binding site for beta-alanine. An ATP-binding site is contributed by 148–151 (GKKD). Gln154 is a binding site for (R)-pantoate. ATP is bound by residues Ile177 and 185 to 188 (KSSR).

It belongs to the pantothenate synthetase family. Homodimer.

The protein localises to the cytoplasm. The catalysed reaction is (R)-pantoate + beta-alanine + ATP = (R)-pantothenate + AMP + diphosphate + H(+). It functions in the pathway cofactor biosynthesis; (R)-pantothenate biosynthesis; (R)-pantothenate from (R)-pantoate and beta-alanine: step 1/1. Functionally, catalyzes the condensation of pantoate with beta-alanine in an ATP-dependent reaction via a pantoyl-adenylate intermediate. The sequence is that of Pantothenate synthetase from Oceanobacillus iheyensis (strain DSM 14371 / CIP 107618 / JCM 11309 / KCTC 3954 / HTE831).